The chain runs to 516 residues: MTNVSIIVLDFGSQYTQLIARRLREDKIYCEILPYHTKVADIKAKNPQGIILSGGPSSVYNKDAYEVDQGVYKMDIPVLGICYGMQRIAADFGGSVVRASHHEYGKAELKILNLETNPSPLFKDCDDERIVWMSHSDKVDTLPAGFEPIAVSSNSPYAAIANEEKRIYAMQYHPEVQHSEEGYLMLRNFARNICGVTEKWKMEHFLKEQIKNIRAKVGSGKVLCGLSGGVDSSVVAAMLYEAIGDQLVPVFVDNGLLRKGEREQVEEVFKINLKVPLVVVDARENFLSKLAGVSDPEKKRKIIGHTFIEEFEKEAKKHDGIKFLAQGTLYPDVIESISVNGPSEVIKSHHNVGGLPDWMDFELIEPLRELFKDEVRKIGLELGLPESMINRHPFPGPGLAIRIMGDVNEADLTLLREADVILLDELKASGYYAKTWQAFVVLLNVKSVGVMGDNRTYDNTVCVRVVEAVDGMTATFAHLPHDLLERISRRIINEVDGINRVVYDISSKPPATIEWE.

The Glutamine amidotransferase type-1 domain occupies S5 to K199. The active-site Nucleophile is C82. Active-site residues include H173 and E175. One can recognise a GMPS ATP-PPase domain in the interval W200–R391. ATP is bound at residue S227 to S233.

As to quaternary structure, homodimer.

The enzyme catalyses XMP + L-glutamine + ATP + H2O = GMP + L-glutamate + AMP + diphosphate + 2 H(+). Its pathway is purine metabolism; GMP biosynthesis; GMP from XMP (L-Gln route): step 1/1. Catalyzes the synthesis of GMP from XMP. This Sulfurimonas denitrificans (strain ATCC 33889 / DSM 1251) (Thiomicrospira denitrificans (strain ATCC 33889 / DSM 1251)) protein is GMP synthase [glutamine-hydrolyzing].